The following is a 448-amino-acid chain: Cyclic dof factor 3 (448 aa).

Residues 26-108 are disordered; sequence AVTVEDDEED…DGKTLKKPTK (83 aa). Over residues 29-39 the composition is skewed to acidic residues; the sequence is VEDDEEDDWSG. A compositionally biased stretch (basic and acidic residues) spans 40 to 54; sequence GDDKSPEKVTPELSD. Residues 55-69 are compositionally biased toward low complexity; it reads KNNNNCNDNSFNNSK. Polar residues predominate over residues 80–99; that stretch reads STDQIESSDTPEDNQQTTPD. The Dof-type zinc-finger motif lies at 110–164; it reads LPCPRCKSMETKFCYYNNYNINQPRHFCKACQRYWTAGGTMRNVPVGAGRRKNKS. 4 residues coordinate Zn(2+): C112, C115, C137, and C140. Disordered stretches follow at residues 243–269 and 332–370; these read NGDDCSSGSSVTTSNNHSVDESRAQSG and SSSPISQKCSNTNSPTLGKHPRDEGSSKKDNETERKQKA. Polar residues-rich tracts occupy residues 246 to 259 and 332 to 347; these read DCSSGSSVTTSNNH and SSSPISQKCSNTNSPT. The segment covering 351–368 has biased composition (basic and acidic residues); the sequence is HPRDEGSSKKDNETERKQ.

In terms of assembly, interacts with ADO2 (via kelch repeats) and ADO3 (via kelch repeats). In terms of tissue distribution, expressed in the vasculature of cotyledons and hypocotyls, leaves and roots.

It localises to the nucleus. In terms of biological role, transcription factor that binds specifically to a 5'-AA[AG]G-3' consensus core sequence. Regulates a photoperiodic flowering response. Transcriptional repressor of 'CONSTANS' expression. The protein is Cyclic dof factor 3 (CDF3) of Arabidopsis thaliana (Mouse-ear cress).